The chain runs to 296 residues: Bifunctional protein FolD (296 aa).

NADP(+) is bound by residues 169–171 (GRG), Thr196, and Val237.

This sequence belongs to the tetrahydrofolate dehydrogenase/cyclohydrolase family. Homodimer.

It catalyses the reaction (6R)-5,10-methylene-5,6,7,8-tetrahydrofolate + NADP(+) = (6R)-5,10-methenyltetrahydrofolate + NADPH. The enzyme catalyses (6R)-5,10-methenyltetrahydrofolate + H2O = (6R)-10-formyltetrahydrofolate + H(+). The protein operates within one-carbon metabolism; tetrahydrofolate interconversion. In terms of biological role, catalyzes the oxidation of 5,10-methylenetetrahydrofolate to 5,10-methenyltetrahydrofolate and then the hydrolysis of 5,10-methenyltetrahydrofolate to 10-formyltetrahydrofolate. This chain is Bifunctional protein FolD, found in Kocuria rhizophila (strain ATCC 9341 / DSM 348 / NBRC 103217 / DC2201).